Here is a 344-residue protein sequence, read N- to C-terminus: Mitogen-activated protein kinase mpkC (344 aa).

The 280-residue stretch at 19–298 folds into the Protein kinase domain; it reads YANVQPVGLG…AETALQHPYL (280 aa). Residues 25 to 33 and Lys48 contribute to the ATP site; that span reads VGLGAFGLV. Asp140 functions as the Proton acceptor in the catalytic mechanism. Thr170 is subject to Phosphothreonine. The TXY motif lies at 170–172; the sequence is TGY. Phosphotyrosine is present on Tyr172.

Belongs to the protein kinase superfamily. Ser/Thr protein kinase family. MAP kinase subfamily. HOG1 sub-subfamily. The cofactor is Mg(2+). In terms of processing, dually phosphorylated on Thr-170 and Tyr-172, which activates the enzyme.

The catalysed reaction is L-seryl-[protein] + ATP = O-phospho-L-seryl-[protein] + ADP + H(+). It catalyses the reaction L-threonyl-[protein] + ATP = O-phospho-L-threonyl-[protein] + ADP + H(+). Its activity is regulated as follows. Activated by tyrosine and threonine phosphorylation. Mitogen-activated protein kinase required for growth on media where sorbitol or mannitol is the sole carbon source. In Aspergillus oryzae (strain ATCC 42149 / RIB 40) (Yellow koji mold), this protein is Mitogen-activated protein kinase mpkC (mpkC).